A 333-amino-acid polypeptide reads, in one-letter code: UDP-N-acetylglucosamine--N-acetylmuramyl-(pentapeptide) pyrophosphoryl-undecaprenol N-acetylglucosamine transferase (333 aa).

UDP-N-acetyl-alpha-D-glucosamine contacts are provided by residues 10–12 (TGG), asparagine 124, serine 177, and glutamine 275.

It belongs to the glycosyltransferase 28 family. MurG subfamily.

The protein resides in the cell inner membrane. The catalysed reaction is di-trans,octa-cis-undecaprenyl diphospho-N-acetyl-alpha-D-muramoyl-L-alanyl-D-glutamyl-meso-2,6-diaminopimeloyl-D-alanyl-D-alanine + UDP-N-acetyl-alpha-D-glucosamine = di-trans,octa-cis-undecaprenyl diphospho-[N-acetyl-alpha-D-glucosaminyl-(1-&gt;4)]-N-acetyl-alpha-D-muramoyl-L-alanyl-D-glutamyl-meso-2,6-diaminopimeloyl-D-alanyl-D-alanine + UDP + H(+). The protein operates within cell wall biogenesis; peptidoglycan biosynthesis. Cell wall formation. Catalyzes the transfer of a GlcNAc subunit on undecaprenyl-pyrophosphoryl-MurNAc-pentapeptide (lipid intermediate I) to form undecaprenyl-pyrophosphoryl-MurNAc-(pentapeptide)GlcNAc (lipid intermediate II). In Nitratiruptor sp. (strain SB155-2), this protein is UDP-N-acetylglucosamine--N-acetylmuramyl-(pentapeptide) pyrophosphoryl-undecaprenol N-acetylglucosamine transferase.